A 287-amino-acid polypeptide reads, in one-letter code: uncharacterized protein (287 aa).

The ATP-grasp domain maps to 115–287 (PQNFDREWNP…NLAIELLKAI (173 aa)). Residues K145 and 178–188 (QKYITCSKGES) contribute to the ATP site. Mg(2+) is bound by residues D248, E261, and N263. Residues D248, E261, and N263 each contribute to the Mn(2+) site.

The protein belongs to the RimK family.

This is an uncharacterized protein from Mycoplasma genitalium (strain ATCC 33530 / DSM 19775 / NCTC 10195 / G37) (Mycoplasmoides genitalium).